The chain runs to 1295 residues: Phosphoribosylformylglycinamidine synthase (1295 aa).

Residues 305–327 (WPGAATGSGGEIRDEGATGRGAK) are disordered. ATP is bound by residues 307–318 (GAATGSGGEIRD) and Ala678. Residues Glu718, Asn722, and Asp884 each contribute to the Mg(2+) site. Ser886 is an ATP binding site. Residues 1042 to 1295 (VAVLREQGVN…IFRNARKQLG (254 aa)) enclose the Glutamine amidotransferase type-1 domain. Cys1135 acts as the Nucleophile in catalysis. Active-site residues include His1260 and Glu1262.

This sequence in the N-terminal section; belongs to the FGAMS family. In terms of assembly, monomer.

The protein resides in the cytoplasm. It catalyses the reaction N(2)-formyl-N(1)-(5-phospho-beta-D-ribosyl)glycinamide + L-glutamine + ATP + H2O = 2-formamido-N(1)-(5-O-phospho-beta-D-ribosyl)acetamidine + L-glutamate + ADP + phosphate + H(+). It functions in the pathway purine metabolism; IMP biosynthesis via de novo pathway; 5-amino-1-(5-phospho-D-ribosyl)imidazole from N(2)-formyl-N(1)-(5-phospho-D-ribosyl)glycinamide: step 1/2. In terms of biological role, phosphoribosylformylglycinamidine synthase involved in the purines biosynthetic pathway. Catalyzes the ATP-dependent conversion of formylglycinamide ribonucleotide (FGAR) and glutamine to yield formylglycinamidine ribonucleotide (FGAM) and glutamate. This chain is Phosphoribosylformylglycinamidine synthase, found in Shigella sonnei (strain Ss046).